The following is a 503-amino-acid chain: Probable protein kinase UbiB (503 aa).

The chain crosses the membrane as a helical span at residues Thr-13–Leu-35. In terms of domain architecture, Protein kinase spans Glu-120–Val-491. ATP-binding positions include Ile-126 to Val-134 and Lys-148. Asp-283 (proton acceptor) is an active-site residue. Residues Gln-485–Leu-502 form a helical membrane-spanning segment.

Belongs to the ABC1 family. UbiB subfamily.

It is found in the cell inner membrane. The protein operates within cofactor biosynthesis; ubiquinone biosynthesis [regulation]. In terms of biological role, is probably a protein kinase regulator of UbiI activity which is involved in aerobic coenzyme Q (ubiquinone) biosynthesis. This is Probable protein kinase UbiB from Neisseria meningitidis serogroup A / serotype 4A (strain DSM 15465 / Z2491).